The sequence spans 678 residues: MRSPRVIHLACVIAYIVAVEAGDKPVYLPRPTPPRPIHPRLAREVGWELEGQGLSPLSEAELLPEVRERRSPVDKGGYLPRPTPPRPVYRSRRDASLESELSPLSVAEVLPEVRERRSPVDKGGYLPRPTPPRPVYRSRRDASLESELSPLSEAEVLPEVRERRSPVDKGGYLPRPTPPRPVYRSRRVASLESELSPLSEAEVLPEVRERRSPVDKGGYLPRPTPPRPVYRSRRDASLESELSPLSEEEVLPEVRERGSPVDKGGYLPRPTPPRPVYRSRRDASLESELSPLSVAEDLPEVRERRSPVDKGGYLPRPTPPRPVYRSRRDASLESELSPLSEAEVLPEVRERRSPVDKGGYLPRPTPPRPVYRSRRDASLESELSPLSEAEVLPEVRERRSPVDKGGYLPRPTPPRPVYRSRRDASLESELSPLSEAEVLPEVRERRSPVDKGGYLPRPTPPRPVYRSRRDASLESELSPLSEAEVLPEVRERRSPVDKGGYLPRPTPPRPVYRSRRDATLESELSPSSEAEVLPEVRERRSPVDKGGYLPRPTPPRPVYRSRRDASLESELSPLSEAEVLPEVRERRSPVDKGGYLPRPTPPRPVYRSRRDASLESELSPLSEAEGLPEVRERRSPGGQGGYLPRPTPRTPLCRSRRDANLDAEQSPVSEGVVLPEVR.

14 tandem repeats follow at residues 1-67, 68-114, 115-161, 162-208, 209-255, 256-302, 303-349, 350-396, 397-443, 444-490, 491-537, 538-584, 585-631, and 632-678. Positions 1-678 are 14 X approximate tandem repeats; it reads MRSPRVIHLA…SEGVVLPEVR (678 aa). Threonine 32 is a glycosylation site (O-linked (GalNAc...) threonine). Disordered stretches follow at residues 58–97 and 113–678; these read SEAELLPEVRERRSPVDKGGYLPRPTPPRPVYRSRRDASL and VRER…PEVR. Positions 64-73 are enriched in basic and acidic residues; it reads PEVRERRSPV. 2 O-linked (GalNAc...) threonine glycosylation sites follow: threonine 83 and threonine 130. Over residues 145–157 the composition is skewed to low complexity; it reads ESELSPLSEAEVL. Basic and acidic residues predominate over residues 158 to 167; that stretch reads PEVRERRSPV. O-linked (GalNAc...) threonine glycosylation is present at threonine 177. Residues 188 to 204 are compositionally biased toward low complexity; sequence VASLESELSPLSEAEVL. Basic and acidic residues predominate over residues 205–214; that stretch reads PEVRERRSPV. O-linked (GalNAc...) threonine glycans are attached at residues threonine 224 and threonine 271. Positions 299-308 are enriched in basic and acidic residues; that stretch reads PEVRERRSPV. Threonine 318 carries O-linked (GalNAc...) threonine glycosylation. The span at 333–345 shows a compositional bias: low complexity; the sequence is ESELSPLSEAEVL. Residues 346–355 are compositionally biased toward basic and acidic residues; that stretch reads PEVRERRSPV. Threonine 365 is a glycosylation site (O-linked (GalNAc...) threonine). The segment covering 380 to 392 has biased composition (low complexity); the sequence is ESELSPLSEAEVL. The span at 393–402 shows a compositional bias: basic and acidic residues; that stretch reads PEVRERRSPV. The O-linked (GalNAc...) threonine glycan is linked to threonine 412. Residues 427–439 are compositionally biased toward low complexity; that stretch reads ESELSPLSEAEVL. Basic and acidic residues predominate over residues 440 to 449; sequence PEVRERRSPV. O-linked (GalNAc...) threonine glycosylation is present at threonine 459. Residues 474-486 show a composition bias toward low complexity; that stretch reads ESELSPLSEAEVL. Residues 487-496 are compositionally biased toward basic and acidic residues; that stretch reads PEVRERRSPV. An O-linked (GalNAc...) threonine glycan is attached at threonine 506. The span at 521–533 shows a compositional bias: low complexity; that stretch reads ESELSPSSEAEVL. Basic and acidic residues predominate over residues 534–543; the sequence is PEVRERRSPV. Threonine 553 carries O-linked (GalNAc...) threonine glycosylation. The span at 568-580 shows a compositional bias: low complexity; it reads ESELSPLSEAEVL. Residues 581 to 590 show a composition bias toward basic and acidic residues; sequence PEVRERRSPV. Threonine 600 carries an O-linked (GalNAc...) threonine glycan. Over residues 615-627 the composition is skewed to low complexity; the sequence is ESELSPLSEAEGL. An O-linked (GalNAc...) threonine glycan is attached at threonine 647.

The protein resides in the secreted. Its function is as follows. Has antibacterial activity in vitro. This chain is Probable antibacterial peptide polyprotein, found in Riptortus clavatus (Bean bug).